Reading from the N-terminus, the 93-residue chain is UPF0358 protein lwe1048 (93 aa).

The protein belongs to the UPF0358 family.

This chain is UPF0358 protein lwe1048, found in Listeria welshimeri serovar 6b (strain ATCC 35897 / DSM 20650 / CCUG 15529 / CIP 8149 / NCTC 11857 / SLCC 5334 / V8).